We begin with the raw amino-acid sequence, 203 residues long: Acid phosphatase (203 aa).

Residue His-13 is the Tele-phosphohistidine intermediate of the active site. The active-site Proton donor/acceptor is Glu-85.

It belongs to the phosphoglycerate mutase family. Homodimer.

It carries out the reaction a phosphate monoester + H2O = an alcohol + phosphate. The enzyme catalyses beta-D-fructose 1,6-bisphosphate + H2O = beta-D-fructose 6-phosphate + phosphate. The protein operates within carbohydrate biosynthesis; gluconeogenesis. With respect to regulation, in contrast to classical FBPases, is resistant to inhibition by lithium. Functionally, phosphatase with a broad specificity. Can dephosphorylate a variety of substrates including phosphorylated sugars like fructose-6-phosphate (F6P). Is able to function in vivo as a fructose-1,6-bisphosphatase (FBPase) and to maintain gluconeogenesis when the classical FBPase GlpX is absent. Shows negligible phosphoglycerate mutase activity. Has no phosphatase activity against 3-phosphoglycerate, 2,3-bisphosphoglycerate, or hydrophobic substrates such as alpha-napthyl phosphate. The protein is Acid phosphatase of Mycobacterium tuberculosis (strain ATCC 25618 / H37Rv).